The chain runs to 194 residues: UPF0301 protein FTA_1286 (194 aa).

It belongs to the UPF0301 (AlgH) family.

The polypeptide is UPF0301 protein FTA_1286 (Francisella tularensis subsp. holarctica (strain FTNF002-00 / FTA)).